The chain runs to 414 residues: Cytochrome P450 GfsF (414 aa).

The tract at residues 1–32 is disordered; that stretch reads MTDTTLVEAGDPAEDAPEWPMKRDTGCPFDPP. Residues His75, His107, Arg111, Arg303, His361, and Cys363 each coordinate heme b.

The protein belongs to the cytochrome P450 family. As to quaternary structure, monomer. Heme b is required as a cofactor.

It functions in the pathway antibiotic biosynthesis. In terms of biological role, involved in the synthesis of the 16-membered macrolide antibiotics FD-891 and FD-892. Consecutively catalyzes epoxidation of C8-C9 and then hydroxylation at C10 to convert 25-O-methyl-FD-892 to FD-891. Consecutively catalyzes epoxidation of C8-C9 and then hydroxylation at C10 to convert 8,9-epoxy-FD-892 to 25-O-demethyl-FD-891 as well as converting 25-oxo-FD-892 to 8,9-epoxy-25-oxo-FD-892 and 8,9-epoxy-10-hydroxy-25-oxo-FD-892. In vitro is furnished with P.putida putidaredoxin and putidaredoxin reductase to provide the required two-electron reduction. The polypeptide is Cytochrome P450 GfsF (Streptomyces halstedii).